The sequence spans 453 residues: Tubulin delta chain (453 aa).

143-149 (AGGTGSG) lines the GTP pocket.

This sequence belongs to the tubulin family. Found in a complex with TEDC1, TEDC2, TUBE1 and TUBD1.

The protein localises to the nucleus. Its subcellular location is the cytoplasm. It is found in the cytoskeleton. The protein resides in the microtubule organizing center. It localises to the centrosome. The protein localises to the centriole. Its subcellular location is the cell projection. It is found in the cilium. In terms of biological role, acts as a positive regulator of hedgehog signaling and regulates ciliary function. The polypeptide is Tubulin delta chain (TUBD1) (Canis lupus familiaris (Dog)).